We begin with the raw amino-acid sequence, 286 residues long: METTKKLSVLLCLFFTMNQAISESDSDEHMATFCNDSSGNFTRNTTYNTNLNTLLSTLSNQSSFANYYNLTTGLGSDTVHGMFLCIGDVNRTTCNACVKNATIEIAKNCTNHREAIIYYFSCMVRYSDKFFLSTLETKPNTYWSSDDPIPKSYDKFGQRLSDKMGEVIIRSSLLSSSFTPYYLMDTTTFDNLYDLESVVQCSPHLDPKNCTTCLKLALQELTQCCGDQLWAFIFTPKCLVSFDTSNSSSLPPLPPPSRSGSFSIRGNNKILVGMILAVSVFAFLGL.

Positions 1–20 (METTKKLSVLLCLFFTMNQA) are cleaved as a signal peptide. Residues 21-265 (ISESDSDEHM…PSRSGSFSIR (245 aa)) are Extracellular-facing. 2 consecutive Gnk2-homologous domains span residues 29-131 (HMAT…DKFF) and 137-247 (TKPN…TSNS). 10 N-linked (GlcNAc...) asparagine glycosylation sites follow: Asn-35, Asn-40, Asn-44, Asn-60, Asn-69, Asn-90, Asn-100, Asn-108, Asn-209, and Asn-246. A helical membrane pass occupies residues 266–284 (GNNKILVGMILAVSVFAFL). The Cytoplasmic segment spans residues 285–286 (GL).

Belongs to the cysteine-rich repeat secretory protein family.

The protein localises to the membrane. The sequence is that of Cysteine-rich repeat secretory protein 57 (CRRSP57) from Arabidopsis thaliana (Mouse-ear cress).